A 695-amino-acid polypeptide reads, in one-letter code: Eukaryotic translation initiation factor 3 subunit B (695 aa).

The span at 1-10 (MAKKKGDEKA) shows a compositional bias: basic and acidic residues. Residues 1-43 (MAKKKGDEKANPAPQSDNEEQNFEEEPDFDDPEDFVEIPEEEL) form a disordered region. Over residues 17 to 43 (DNEEQNFEEEPDFDDPEDFVEIPEEEL) the composition is skewed to acidic residues. Positions 60 to 144 (NVVVVDGCPQ…HTFLVNLFTD (85 aa)) constitute an RRM domain. 4 WD repeats span residues 164-205 (KVQS…PLLL), 295-335 (PPDE…LLDK), 338-373 (IKIP…TLLE), and 444-486 (EIKE…APTL).

This sequence belongs to the eIF-3 subunit B family. In terms of assembly, component of the eukaryotic translation initiation factor 3 (eIF-3) complex.

Its subcellular location is the cytoplasm. Functionally, RNA-binding component of the eukaryotic translation initiation factor 3 (eIF-3) complex, which is involved in protein synthesis of a specialized repertoire of mRNAs and, together with other initiation factors, stimulates binding of mRNA and methionyl-tRNAi to the 40S ribosome. The eIF-3 complex specifically targets and initiates translation of a subset of mRNAs involved in cell proliferation. In Bombyx mori (Silk moth), this protein is Eukaryotic translation initiation factor 3 subunit B.